We begin with the raw amino-acid sequence, 677 residues long: Pannexin-2 (677 aa).

At 11 to 47 (MATALLAGEKLRELILPGAQDDKAGALAALLLQLKLE) the chain is on the cytoplasmic side. A helical transmembrane segment spans residues 48–70 (LPFDRVVTIGTVLVPILLVTLVF). Residues 71 to 123 (TKNFAEEPIYCYTPHNFTRDQALYARGYCWTELRDALPGVDASLWPSLFEHKF) are Extracellular-facing. The N-linked (GlcNAc...) asparagine glycan is linked to Asn86. The chain crosses the membrane as a helical span at residues 124 to 146 (LPYALLAFAAIMYVPALGWEFLA). Residues 147–226 (STRLTSELNF…RGRSNFLAKL (80 aa)) are Cytoplasmic-facing. Residues 227 to 249 (YLARHVLILLLSAVPISYLCTYY) form a helical membrane-spanning segment. Over 250-292 (ATQKQNEFTCALGASPDGAAGAGPAVRVSCKLPSVQLQRIIAG) the chain is Extracellular. The chain crosses the membrane as a helical span at residues 293–315 (VDIVLLCVMNLIILVNLIHLFIF). The Cytoplasmic segment spans residues 316–643 (RKSNFIFDKL…AREEEDGGPR (328 aa)). 2 disordered regions span residues 393 to 423 (ATPTVRDSGVQTVDPSANPAEPDGAAEPPVV) and 454 to 510 (NSKA…KKHA). Residues 492-504 (GPGPAPAPAPPPA) show a composition bias toward pro residues. Ser593 carries the phosphoserine modification.

The protein belongs to the pannexin family. As to quaternary structure, homoheptameric. S-palmitoylated in neural stem and progenitor cells. In terms of processing, cleaved by CASP3 and CASP7 during apoptosis. Cleavage has no effect on it function.

It is found in the cell membrane. Its subcellular location is the golgi apparatus membrane. It localises to the endoplasmic reticulum membrane. It catalyses the reaction ATP(in) = ATP(out). The catalysed reaction is chloride(in) = chloride(out). The enzyme catalyses iodide(out) = iodide(in). It carries out the reaction Na(+)(in) = Na(+)(out). It catalyses the reaction D-gluconate(in) = D-gluconate(out). Its function is as follows. Ion channel with a slight anion preference. Also able to release ATP. Plays a role in regulating neurogenesis and apoptosis in keratinocytes. This is Pannexin-2 from Homo sapiens (Human).